Consider the following 825-residue polypeptide: NT-3 growth factor receptor (825 aa).

Positions 1–31 are cleaved as a signal peptide; that stretch reads MDVSLCPAKCSFWRIFLLGSVWLDYVGSVLA. Intrachain disulfides connect C32-C38 and C36-C45. The Extracellular portion of the chain corresponds to 32–429; that stretch reads CPANCVCSKT…TVTHKPEEDT (398 aa). Residues N68, N72, and N79 are each glycosylated (N-linked (GlcNAc...) asparagine). LRR repeat units lie at residues 104-125 and 128-149; these read GLQK…AFAK and HLRY…LFQT. 2 N-linked (GlcNAc...) asparagine glycosylation sites follow: N133 and N163. The LRRCT domain maps to 160–209; that stretch reads NFFNCSCDIRWMQLWQEQGEAKLNNQNLYCINADGSQLPLFRMNISQCDL. 2 cysteine pairs are disulfide-bonded: C164/C189 and C166/C207. N203, N218, N232, N259, N267, N272, and N294 each carry an N-linked (GlcNAc...) asparagine glycan. Ig-like C2-type domains lie at 210 to 300 and 309 to 382; these read PEIS…VALT and SLEE…IAKN. C231 and C284 are disulfide-bonded. C320 and C362 are disulfide-bonded. N375 and N388 each carry an N-linked (GlcNAc...) asparagine glycan. A helical transmembrane segment spans residues 430–453; sequence FGVSIAVGLAAFACVLLVVLFIMI. The Cytoplasmic segment spans residues 454–825; it reads NKYGRRSKFG…ATPIYLDILG (372 aa). The residue at position 493 (S493) is a Phosphoserine. At Y516 the chain carries Phosphotyrosine; by autocatalysis. One can recognise a Protein kinase domain in the interval 538–825; that stretch reads IVLKRELGEG…ATPIYLDILG (288 aa). ATP-binding positions include 544–552 and K572; that span reads LGEGAFGKV. D679 serves as the catalytic Proton acceptor. Phosphotyrosine; by autocatalysis is present on residues Y705, Y709, and Y710.

It belongs to the protein kinase superfamily. Tyr protein kinase family. Insulin receptor subfamily. As to quaternary structure, exists in a dynamic equilibrium between monomeric (low affinity) and dimeric (high affinity) structures. Binds SH2B2. Interacts with SQSTM1 and KIDINS220. Interacts with PTPRS. Interacts with MAPK8IP3/JIP3. Ligand-mediated auto-phosphorylation.

Its subcellular location is the membrane. The catalysed reaction is L-tyrosyl-[protein] + ATP = O-phospho-L-tyrosyl-[protein] + ADP + H(+). Functionally, receptor tyrosine kinase involved in nervous system and probably heart development. Upon binding of its ligand NTF3/neurotrophin-3, NTRK3 autophosphorylates and activates different signaling pathways, including the phosphatidylinositol 3-kinase/AKT and the MAPK pathways, that control cell survival and differentiation. This Macaca fascicularis (Crab-eating macaque) protein is NT-3 growth factor receptor (NTRK3).